We begin with the raw amino-acid sequence, 450 residues long: Bifunctional apoptosis regulator (450 aa).

A disordered region spans residues 1-24 (MEEPQKNDLSMRGQEEDHPVRSSG). Topologically, residues 1–140 (MEEPQKNDLS…PSTGRVNQQR (140 aa)) are cytoplasmic. The RING-type zinc finger occupies 34–74 (CHCCYDTLVNPTTLNCGHSFCRHCLALWWMSSKKTECPECR). Residues 141 to 161 (GGGFFSGVLTALTGVAVILLV) traverse the membrane as a helical segment. Residues 162–331 (YHWRSRESEH…REPTWKQWRE (170 aa)) are Extracellular-facing. Residues 182-249 (WTTEEVVLWL…LMELERVRAL (68 aa)) enclose the SAM domain. N-linked (GlcNAc...) asparagine glycosylation is present at Asn-232. A helical membrane pass occupies residues 332–352 (FLIKYSFLPYQLIAEFAWDWL). Over 353–360 (EVHYWTSR) the chain is Cytoplasmic. Residues 361–381 (FLIVNAMLLSVLELFSFWRIW) traverse the membrane as a helical segment. The Extracellular segment spans residues 382-404 (SRSELKTVPQRMWSHFWKVSTQG). A helical membrane pass occupies residues 405–425 (LFMAMFWPLIPQFVCNCLFYW). Topologically, residues 426–450 (ALYFNPIINIDLVVKEIRRLETQVF) are cytoplasmic.

Interacts with CASP8, BCL2 and BCL2L1 through SAM domain and also with HIP1, IFT57, ESRRBL1 and BCAP31. Interacts with NGFR; this interaction inhibits NF-kappa-B and JNK-related signaling pathways. In terms of processing, mediates RING-dependent self-ubiquitination leading to proteasomal degradation.

The protein localises to the endoplasmic reticulum membrane. It catalyses the reaction S-ubiquitinyl-[E2 ubiquitin-conjugating enzyme]-L-cysteine + [acceptor protein]-L-lysine = [E2 ubiquitin-conjugating enzyme]-L-cysteine + N(6)-ubiquitinyl-[acceptor protein]-L-lysine.. Functionally, membrane-bound E3 ubiquitin ligase that plays a role in several processes including apoptosis regulation or reticulum endoplasmic stress. Has anti-apoptotic activity, both for apoptosis triggered via death-receptors and via mitochondrial factors. Contributes to the dynamic control of IRE1/ERN1 signaling during ER stress by inducing BAX inhibitor 1/TMBIM6 proteasomal degradation. Promotes the activation of TGF-beta signaling by mediating the 'Lys-63'-linked ubiquitination of TGFBR1 which is critical to activate the pathway. Together with NGFR, negatively regulates NF-kappa-B and JNK-related signaling pathways. Promotes the proteasome-mediated degradation of PNPLA3, a protein involveld in lipid metabolism. The polypeptide is Bifunctional apoptosis regulator (Bfar) (Rattus norvegicus (Rat)).